The sequence spans 459 residues: Bifunctional protein GlmU (459 aa).

A pyrophosphorylase region spans residues 1–229; sequence MSNFAIILAA…FDESLGVNDR (229 aa). Residues 8–11, Lys-22, Gln-72, and 77–78 each bind UDP-N-acetyl-alpha-D-glucosamine; these read LAAG and GT. Position 102 (Asp-102) interacts with Mg(2+). Residues Gly-139, Glu-154, Asn-169, and Asn-227 each coordinate UDP-N-acetyl-alpha-D-glucosamine. A Mg(2+)-binding site is contributed by Asn-227. Residues 230 to 250 are linker; that stretch reads VALATAESVMRRRINHKHMVN. The segment at 251–459 is N-acetyltransferase; that stretch reads GVSFVNPEAT…TRLPHHPKNQ (209 aa). UDP-N-acetyl-alpha-D-glucosamine is bound by residues Arg-332 and Lys-350. His-362 functions as the Proton acceptor in the catalytic mechanism. UDP-N-acetyl-alpha-D-glucosamine is bound by residues Tyr-365 and Asn-376. Residues Ala-379, 385–386, Ser-404, Ala-422, and Arg-439 contribute to the acetyl-CoA site; that span reads NY.

It in the N-terminal section; belongs to the N-acetylglucosamine-1-phosphate uridyltransferase family. This sequence in the C-terminal section; belongs to the transferase hexapeptide repeat family. Homotrimer. It depends on Mg(2+) as a cofactor.

Its subcellular location is the cytoplasm. It catalyses the reaction alpha-D-glucosamine 1-phosphate + acetyl-CoA = N-acetyl-alpha-D-glucosamine 1-phosphate + CoA + H(+). The catalysed reaction is N-acetyl-alpha-D-glucosamine 1-phosphate + UTP + H(+) = UDP-N-acetyl-alpha-D-glucosamine + diphosphate. The protein operates within nucleotide-sugar biosynthesis; UDP-N-acetyl-alpha-D-glucosamine biosynthesis; N-acetyl-alpha-D-glucosamine 1-phosphate from alpha-D-glucosamine 6-phosphate (route II): step 2/2. It functions in the pathway nucleotide-sugar biosynthesis; UDP-N-acetyl-alpha-D-glucosamine biosynthesis; UDP-N-acetyl-alpha-D-glucosamine from N-acetyl-alpha-D-glucosamine 1-phosphate: step 1/1. It participates in bacterial outer membrane biogenesis; LPS lipid A biosynthesis. In terms of biological role, catalyzes the last two sequential reactions in the de novo biosynthetic pathway for UDP-N-acetylglucosamine (UDP-GlcNAc). The C-terminal domain catalyzes the transfer of acetyl group from acetyl coenzyme A to glucosamine-1-phosphate (GlcN-1-P) to produce N-acetylglucosamine-1-phosphate (GlcNAc-1-P), which is converted into UDP-GlcNAc by the transfer of uridine 5-monophosphate (from uridine 5-triphosphate), a reaction catalyzed by the N-terminal domain. This chain is Bifunctional protein GlmU, found in Streptococcus pneumoniae (strain Taiwan19F-14).